The chain runs to 100 residues: Putative antiporter subunit mnhF2 (100 aa).

The next 3 helical transmembrane spans lie at 5–25, 38–60, and 70–92; these read ITHI…IICL, VVTF…VLMG, and LIAI…GHVF.

This sequence belongs to the CPA3 antiporters (TC 2.A.63) subunit F family. In terms of assembly, may form a heterooligomeric complex that consists of seven subunits: mnhA2, mnhB2, mnhC2, mnhD2, mnhE2, mnhF2 and mnhG2.

It localises to the cell membrane. The sequence is that of Putative antiporter subunit mnhF2 (mnhF2) from Staphylococcus aureus (strain USA300).